Reading from the N-terminus, the 528-residue chain is GMP synthase [glutamine-hydrolyzing] (528 aa).

A Glutamine amidotransferase type-1 domain is found at Ala13–Asp204. Cys90 acts as the Nucleophile in catalysis. Residues His178 and Glu180 contribute to the active site. The 199-residue stretch at Trp205 to Arg403 folds into the GMPS ATP-PPase domain. ATP is bound at residue Ser232–Ser238.

As to quaternary structure, homodimer.

It catalyses the reaction XMP + L-glutamine + ATP + H2O = GMP + L-glutamate + AMP + diphosphate + 2 H(+). The protein operates within purine metabolism; GMP biosynthesis; GMP from XMP (L-Gln route): step 1/1. Its function is as follows. Catalyzes the synthesis of GMP from XMP. In Synechococcus sp. (strain CC9311), this protein is GMP synthase [glutamine-hydrolyzing].